Consider the following 105-residue polypeptide: Flower-specific defensin (105 aa).

Positions M1–A25 are cleaved as a signal peptide. Disulfide bonds link C28–C72, C39–C59, C45–C66, and C49–C68. Residues V73–N105 constitute a propeptide, removed in mature form.

Belongs to the DEFL family. In terms of tissue distribution, most abundant in the epidermal cell layers of the petals and sepals, within the connective cells of the anthers, and the cortical cells of the style. Not detected in the tapetum, pollen mother cells, the transmitting tissue, the vascular bundles of the anther and style or in leaves. Expressed also in ovaries, but barley detectable in roots.

Its subcellular location is the secreted. It is found in the vacuole. Its function is as follows. Plant defense peptide with antifungal activity against F.oxysporum and B.cinerea. Retards the growth of the Lepidopteran insect pests H.armigera and H.punctigera. The polypeptide is Flower-specific defensin (D1) (Nicotiana alata (Winged tobacco)).